We begin with the raw amino-acid sequence, 463 residues long: Argininosuccinate lyase (463 aa).

It belongs to the lyase 1 family. Argininosuccinate lyase subfamily.

The protein localises to the cytoplasm. It catalyses the reaction 2-(N(omega)-L-arginino)succinate = fumarate + L-arginine. It functions in the pathway amino-acid biosynthesis; L-arginine biosynthesis; L-arginine from L-ornithine and carbamoyl phosphate: step 3/3. The sequence is that of Argininosuccinate lyase from Bradyrhizobium sp. (strain BTAi1 / ATCC BAA-1182).